A 179-amino-acid polypeptide reads, in one-letter code: Translation initiation factor IF-3 (179 aa).

This sequence belongs to the IF-3 family. As to quaternary structure, monomer.

The protein resides in the cytoplasm. In terms of biological role, IF-3 binds to the 30S ribosomal subunit and shifts the equilibrium between 70S ribosomes and their 50S and 30S subunits in favor of the free subunits, thus enhancing the availability of 30S subunits on which protein synthesis initiation begins. The protein is Translation initiation factor IF-3 of Buchnera aphidicola subsp. Acyrthosiphon pisum (strain APS) (Acyrthosiphon pisum symbiotic bacterium).